The following is a 360-amino-acid chain: Phenylalanine--tRNA ligase alpha subunit (360 aa).

E260 lines the Mg(2+) pocket.

It belongs to the class-II aminoacyl-tRNA synthetase family. Phe-tRNA synthetase alpha subunit type 1 subfamily. Tetramer of two alpha and two beta subunits. Mg(2+) serves as cofactor.

The protein localises to the cytoplasm. It carries out the reaction tRNA(Phe) + L-phenylalanine + ATP = L-phenylalanyl-tRNA(Phe) + AMP + diphosphate + H(+). The sequence is that of Phenylalanine--tRNA ligase alpha subunit from Rhodopseudomonas palustris (strain BisB5).